The primary structure comprises 173 residues: MIYFVFVVLMGLVVGLMAVASNPAPYFAALGLVFSAVVGCGFLVGYGGSFLSLVLFLIYLGGMLVVFAYSAALAAEPYPESWGSWSVFLYILVYLFGFLLVGYYCYGWWYDFYWMSLDVFGEMSVLSGDVSGVPMVYSSGGFLLLVTGWVLLLALFVVLEITRGLSRGALRAV.

6 consecutive transmembrane segments (helical) span residues 1-21 (MIYFVFVVLMGLVVGLMAVAS), 27-47 (FAALGLVFSAVVGCGFLVGYG), 53-73 (LVLFLIYLGGMLVVFAYSAAL), 82-102 (WGSWSVFLYILVYLFGFLLVG), 106-126 (YGWWYDFYWMSLDVFGEMSVL), and 141-161 (GFLLLVTGWVLLLALFVVLEI).

This sequence belongs to the complex I subunit 6 family.

Its subcellular location is the mitochondrion membrane. It carries out the reaction a ubiquinone + NADH + 5 H(+)(in) = a ubiquinol + NAD(+) + 4 H(+)(out). Functionally, core subunit of the mitochondrial membrane respiratory chain NADH dehydrogenase (Complex I) that is believed to belong to the minimal assembly required for catalysis. Complex I functions in the transfer of electrons from NADH to the respiratory chain. The immediate electron acceptor for the enzyme is believed to be ubiquinone. In Latimeria chalumnae (Coelacanth), this protein is NADH-ubiquinone oxidoreductase chain 6 (MT-ND6).